The chain runs to 311 residues: MTPRKAAQRTVLLVVHTGRDEATETARRVKKIVGDNGIALRVLSAEAVDRGSLHLALDNMRAMGVDIEVVDADPHVAQGCELVLVLGGDGTFLRAAELARTARIPVLGVNLGRIGFLAEAEAEAIDVVLEHVIARSYRVEERLTLDIVVRQGGNIIDQGWALNEASLEKGPRLGVLGVVVEIEGRPVSTFGCDGVLVSTPTGSTAYAFSAGGPVLWPDLEAILVVPNNAHALFGRPMVTSPDATVAIELEANGNDALVFCDGRREMIIPAGGRLEVTRCATPVKWARLDSAPFTDRLVSKFRLPVTGWRGK.

The Proton acceptor role is filled by Asp-89. Residues Asp-89–Gly-90, Arg-94, Asn-163–Glu-164, Asp-193, and Thr-204–Ser-209 each bind NAD(+).

Belongs to the NAD kinase family. A divalent metal cation serves as cofactor.

The protein resides in the cytoplasm. It catalyses the reaction NAD(+) + ATP = ADP + NADP(+) + H(+). In terms of biological role, involved in the regulation of the intracellular balance of NAD and NADP, and is a key enzyme in the biosynthesis of NADP. Catalyzes specifically the phosphorylation on 2'-hydroxyl of the adenosine moiety of NAD to yield NADP. This Mycobacterium leprae (strain Br4923) protein is NAD kinase.